The primary structure comprises 642 residues: Aryl hydrocarbon receptor nuclear translocator homolog (642 aa).

The 54-residue stretch at 13-66 folds into the bHLH domain; it reads ASRENHCEIERRRRNKMTAYITELSDMVPTCSALARKPDKLTILRMAVAHMKAL. 2 PAS domains span residues 85-156 and 271-341; these read DQEL…ESQN and TAAN…LKQK. The region spanning 346–389 is the PAC domain; the sequence is SLLYRARAKNSEYVWLRTQAYAFLNPYTDEVEYIVCTNSSGKTM. The disordered stretch occupies residues 450–612; that stretch reads QAPTPQQQQQ…GPAGAGQPQG (163 aa). 2 stretches are compositionally biased toward polar residues: residues 463–482 and 528–554; these read RPGSAQTTPVGYTYDTTHSP and YQYQQTSPARSPSGPTYTQLSAGNGNR. Residues 555-564 show a composition bias toward low complexity; sequence QQAQPGAYQA.

As to quaternary structure, efficient DNA binding requires dimerization with another bHLH protein. Heterodimer with ahr, trh or sim. In terms of tissue distribution, at stage 11, expression is detected in tracheal pits. At later stages, strong expression is also detected in the CNS.

The protein resides in the nucleus. Its function is as follows. Heterodimers of tgo/trh are involved in the control of breathless expression. Plays a role in the cellular or tissue response to oxygen deprivation. The polypeptide is Aryl hydrocarbon receptor nuclear translocator homolog (tgo) (Drosophila melanogaster (Fruit fly)).